Consider the following 787-residue polypeptide: Aconitate hydratase, mitochondrial (787 aa).

A mitochondrion-targeting transit peptide spans 1 to 33 (MISTRLARAGALAPKSRLFLGTRAFATVGDSPL). Substrate contacts are provided by residues glutamine 104 and 197–199 (DSH). [4Fe-4S] cluster-binding residues include cysteine 390, cysteine 453, and cysteine 456. 2 residues coordinate substrate: arginine 479 and arginine 484. A disordered region spans residues 529–559 (LQPPTGEGLPAKGYDPGRDTYQAPPADRSSV). Substrate-binding positions include arginine 612 and 675-676 (SR).

Belongs to the aconitase/IPM isomerase family. [4Fe-4S] cluster serves as cofactor.

It is found in the mitochondrion. It carries out the reaction citrate = D-threo-isocitrate. The catalysed reaction is (2R)-homocitrate = cis-homoaconitate + H2O. It functions in the pathway carbohydrate metabolism; tricarboxylic acid cycle; isocitrate from oxaloacetate: step 2/2. It participates in amino-acid biosynthesis; L-lysine biosynthesis via AAA pathway; L-alpha-aminoadipate from 2-oxoglutarate: step 2/5. Catalyzes the isomerization of citrate to isocitrate via cis-aconitate, a step in the citric acid cycle. Also catalyzes the reversible dehydration of (R)-homocitrate to cis-homoaconitate, a step in the alpha-aminoadipate pathway for lysine biosynthesis. This Aspergillus fumigatus (strain ATCC MYA-4609 / CBS 101355 / FGSC A1100 / Af293) (Neosartorya fumigata) protein is Aconitate hydratase, mitochondrial (acoA).